Here is a 332-residue protein sequence, read N- to C-terminus: uncharacterized protein (332 aa).

The helical transmembrane segment at 27–47 threads the bilayer; the sequence is CAIVFLCVLLILPFLSCCTSL.

The protein resides in the membrane. This is an uncharacterized protein from Treponema pallidum (strain Nichols).